A 289-amino-acid chain; its full sequence is Myoblast determination protein 1 homolog A (289 aa).

One can recognise a bHLH domain in the interval 95 to 146 (DRRKAATMRERRRLSKVNEAFETLKRYTSTNPNQRLPKVEILRNAIRYIESL). A disordered region spans residues 165–212 (SGDSDASSPRSNCSDGMMDYNSPPCGSRRRNSYDSSFYSDSPNDSRLG). 2 stretches are compositionally biased toward polar residues: residues 168-178 (SDASSPRSNCS) and 197-208 (YDSSFYSDSPND).

As to quaternary structure, efficient DNA binding requires dimerization with another bHLH protein.

It is found in the nucleus. May act as a transcriptional activator that promotes transcription of muscle-specific target genes and plays a role in muscle differentiation. The polypeptide is Myoblast determination protein 1 homolog A (myod1-a) (Xenopus laevis (African clawed frog)).